The following is a 273-amino-acid chain: MPRKAREYPEEGEFVVATVKNIHPYGAFLILDEYPGKEGFMHISEVAPTWVKNIRDYVKEGQKVVVKVIRVDPEKGHIDLSLKRVNQQQRKAKLQEYKRAQKAENLLKMAAEKIGKDFETAWREVWVPLEEEYGEVYAAFEDAAQNGIEVLKGLIPDEWLDALKPIIEAYVEIPTVTIDAEFEITVPKPNGIEIIKEALIRARDRANEEKDIDVKFTYQGAPRYRIDITAPDYYKAEEVLESIAEEILRVIKEAGGEATLIRKEKRIRKIKRR.

The S1 motif domain occupies 12–83 (GEFVVATVKN…EKGHIDLSLK (72 aa)).

This sequence belongs to the eIF-2-alpha family. As to quaternary structure, heterotrimer composed of an alpha, a beta and a gamma chain.

In terms of biological role, eIF-2 functions in the early steps of protein synthesis by forming a ternary complex with GTP and initiator tRNA. The sequence is that of Translation initiation factor 2 subunit alpha from Thermococcus gammatolerans (strain DSM 15229 / JCM 11827 / EJ3).